The sequence spans 2225 residues: Genome polyprotein (2225 aa).

Short sequence motifs ((L)YPX(n)L motif) lie at residues 167–171 (YPHGL) and 200–205 (YPVWEL). The involved in P1-2A pentamerization stretch occupies residues 766-836 (MMSRIAAGDL…PRKMKGLFSQ (71 aa)). The helical transmembrane segment at 1011–1031 (TVDIVNIVLCFVKSGILLYVI) threads the bilayer. The tract at residues 1043 to 1070 (IGLLRVMNYADIGCSVISCGKVFSKMLE) is membrane-penetrating ability. Positions 1127 to 1152 (KKKDVLNVLKDNQQRIERAIEEADNF) form a coiled coil. Residues 1204–1366 (HQKLKNLGSI…SFFQNPHNDM (163 aa)) enclose the SF3 helicase domain. 1230–1237 (GKRGGGKS) provides a ligand contact to ATP. Residues 1460-1480 (WVAVGAAVGILGVLVGGWFVY) traverse the membrane as a helical segment. Tyr-1497 is modified (O-(5'-phospho-RNA)-tyrosine). One can recognise a Peptidase C3 domain in the interval 1512 to 1726 (DPVESQSTLE…VAKLVTQEMF (215 aa)). Residues His-1561, Asp-1601, and Cys-1689 each act as for protease 3C activity in the active site. Residues 1974–2095 (DVGLDLDFSA…VFSRDIQIDN (122 aa)) form the RdRp catalytic domain.

This sequence belongs to the picornaviridae polyprotein family. In terms of assembly, homodimer. Homomultimer; probably interacts with membranes in a multimeric form. Seems to assemble into amyloid-like fibers. As to quaternary structure, homodimer. Monomer. Interacts with protein 3CD. Interacts with host ACBD3. In terms of assembly, interacts with protein 3AB. As to quaternary structure, interacts with human MAVS. Homodimer; disulfide-linked. In terms of assembly, homopentamer. Homooligomer. As to quaternary structure, interacts with capsid protein VP2. Interacts with capsid protein VP3. Interacts with capsid protein VP1. Interacts with capsid protein VP3. In terms of assembly, interacts with capsid protein VP1. Interacts with capsid protein VP2. Specific enzymatic cleavages by viral protease in vivo yield a variety of precursors and mature proteins. Polyprotein processing intermediates are produced, such as P1-2A which is a functional precursor of the structural proteins, VP0 which is a VP4-VP2 precursor, VP1-2A precursor, 3ABC precursor which is a stable and catalytically active precursor of 3A, 3B and 3C proteins, 3AB and 3CD precursors. The assembly signal 2A is removed from VP1-2A by a host protease, possibly host Cathepsin L. This cleavage occurs over a region of 3 amino-acids probably generating VP1 proteins with heterogeneous C-termini. Post-translationally, during virion maturation, immature virions are rendered infectious following cleavage of VP0 into VP4 and VP2. This maturation seems to be an autocatalytic event triggered by the presence of RNA in the capsid and is followed by a conformational change of the particle. In terms of processing, the assembly signal 2A is removed from VP1-2A by a host protease, possibly host Cathepsin L in naked virions. This cleavage does not occur in enveloped virions. This cleavage occurs over a region of 3 amino-acids probably generating VP1 proteins with heterogeneous C-termini. VPg is uridylylated prior to priming replication into VPg-pUpU. Post-translationally, unlike other picornaviruses, does not seem to be myristoylated.

It localises to the virion. It is found in the host endosome. The protein resides in the host multivesicular body. The protein localises to the host membrane. Its subcellular location is the host mitochondrion outer membrane. It localises to the host cytoplasm. It is found in the host cytoplasmic vesicle membrane. It catalyses the reaction RNA(n) + a ribonucleoside 5'-triphosphate = RNA(n+1) + diphosphate. The enzyme catalyses a ribonucleoside 5'-triphosphate + H2O = a ribonucleoside 5'-diphosphate + phosphate + H(+). The catalysed reaction is Selective cleavage of Gln-|-Gly bond in the poliovirus polyprotein. In other picornavirus reactions Glu may be substituted for Gln, and Ser or Thr for Gly.. Functionally, capsid proteins VP1, VP2, and VP3 form a closed capsid enclosing the viral positive strand RNA genome. All these proteins contain a beta-sheet structure called beta-barrel jelly roll. Together they form an icosahedral capsid (T=3) composed of 60 copies of each VP1, VP2, and VP3, with a diameter of approximately 300 Angstroms. VP1 is situated at the 12 fivefold axes, whereas VP2 and VP3 are located at the quasi-sixfold axes. The naked capsid interacts with the host receptor HAVCR1 to provide virion attachment to and probably entry into the target cell. Its function is as follows. VP0 precursor is a component of the immature procapsids. Plays a role in the assembly of the 12 pentamers into an icosahedral structure. Has not been detected in mature virions, supposedly owing to its small size. In terms of biological role, precursor component of immature procapsids that corresponds to an extended form of the structural protein VP1. After maturation, possibly by the host Cathepsin L, the assembly signal 2A is cleaved to give rise to the mature VP1 protein. Functionally, functions as a viroporin. Affects membrane integrity and causes an increase in membrane permeability. Involved in host intracellular membrane rearrangements probably to give rise to the viral factories. Does not disrupt calcium homeostasis or glycoprotein trafficking. Antagonizes the innate immune response of the host by suppressing IFN-beta synthesis, which it achieves by interfering with the RIG-I/IFIH1 pathway. Its function is as follows. Affects membrane integrity and causes an increase in membrane permeability. Associates with and induces structural rearrangements of intracellular membranes. Displays RNA-binding activity. In terms of biological role, the precursor 3ABC is targeted to the mitochondrial membrane where protease 3C activity cleaves and inhibits the host antiviral protein MAVS, thereby disrupting activation of IRF3 through the IFIH1/MDA5 pathway. In vivo, the protease activity of 3ABC precursor is more efficient in cleaving the 2BC precursor than that of protein 3C. The 3ABC precursor may therefore play a role in the proteolytic processing of the polyprotein. Possible viroporin. Functionally, interacts with the 3CD precursor and with RNA structures found at both the 5'- and 3'-termini of the viral genome. Since the 3AB precursor contains the hydrophobic domain 3A, it probably anchors the whole viral replicase complex to intracellular membranes on which viral RNA synthesis occurs. Its function is as follows. May serve as membrane anchor to the 3AB and 3ABC precursors via its hydrophobic domain. May interact with RNA. Acts as a primer for viral RNA replication and remains covalently bound to viral genomic RNA. VPg is uridylylated prior to priming replication into VPg-pUpU. The VPg-pUpU is then used as primer on the genomic RNA poly(A) by the RNA-dependent RNA polymerase to replicate the viral genome. In terms of biological role, cysteine protease that generates mature viral proteins from the precursor polyprotein. In addition to its proteolytic activity, it binds to viral RNA, and thus influences viral genome replication. RNA and substrate bind cooperatively to the protease. Cleaves IKBKG/NEMO to impair innate immune signaling. Cleaves host PABPC1 which may participate in the switch of viral translation to RNA synthesis. Functionally, interacts with the 3AB precursor and with RNA structures found at both the 5'- and 3'-termini of the viral genome. Disrupts TLR3 signaling by degrading the host adapter protein TICAM1/TRIF. Its function is as follows. RNA-directed RNA polymerase 3D-POL replicates genomic and antigenomic RNA by recognizing replications specific signals. This Homo sapiens (Human) protein is Genome polyprotein.